A 626-amino-acid chain; its full sequence is Chaperone protein HtpG (626 aa).

The tract at residues 1–338 is a; substrate-binding; the sequence is MTANKNQKKT…SNDLPLNVSR (338 aa). Residues 339–553 form a b region; that stretch reads EILQDHKLVY…SNEMSTQMAK (215 aa). Residues 554–626 are c; that stretch reads LFSAAGQTVP…ARINDLLINN (73 aa).

This sequence belongs to the heat shock protein 90 family. As to quaternary structure, homodimer.

It localises to the cytoplasm. Molecular chaperone. Has ATPase activity. This chain is Chaperone protein HtpG, found in Buchnera aphidicola subsp. Baizongia pistaciae (strain Bp).